The primary structure comprises 93 residues: HssA/B-like protein 23 (93 aa).

The protein belongs to the hssA/B family.

The sequence is that of HssA/B-like protein 23 (hssl23) from Dictyostelium discoideum (Social amoeba).